The following is a 623-amino-acid chain: Chaperone protein DnaK (623 aa).

Thr-174 carries the post-translational modification Phosphothreonine; by autocatalysis. Disordered regions lie at residues 470-504 (ITIKSSSGLSDEEIKKMQKDAEEHAEEDKKRKEEV) and 578-623 (GGAQ…DPDK). A compositionally biased stretch (basic and acidic residues) spans 481–504 (EEIKKMQKDAEEHAEEDKKRKEEV). Positions 578–604 (GGAQGAAGQAGPQGAQGGQPNNDNGSS) are enriched in low complexity. The segment covering 614-623 (GDFHKVDPDK) has biased composition (basic and acidic residues).

It belongs to the heat shock protein 70 family.

Its function is as follows. Acts as a chaperone. The chain is Chaperone protein DnaK from Lactobacillus gasseri (strain ATCC 33323 / DSM 20243 / BCRC 14619 / CIP 102991 / JCM 1131 / KCTC 3163 / NCIMB 11718 / NCTC 13722 / AM63).